A 185-amino-acid polypeptide reads, in one-letter code: Ribosome-recycling factor (185 aa).

The protein belongs to the RRF family.

It localises to the cytoplasm. Responsible for the release of ribosomes from messenger RNA at the termination of protein biosynthesis. May increase the efficiency of translation by recycling ribosomes from one round of translation to another. This is Ribosome-recycling factor from Shewanella amazonensis (strain ATCC BAA-1098 / SB2B).